A 153-amino-acid polypeptide reads, in one-letter code: Protein DpnD (153 aa).

In Streptococcus pneumoniae serotype 4 (strain ATCC BAA-334 / TIGR4), this protein is Protein DpnD.